We begin with the raw amino-acid sequence, 361 residues long: MMDSPKKLGYHMPAEYEPHHGTLMIWPIRPGSWPFQGKAAKRAFTQIIETIAEGERVYLLVEQAYLSEAQSYLGDKVVYLDIPTNDAWARDTGPTILVNDKGKKLAVDWAFNAWGGTYDGLYQDYEEDDQVASRFAEALERPVYDAKPFVLEGGAIHSDGQGTILVTESCLLSPGRNPNLTKEEIENTLLESLGAEKVIWLPYGIYQDETNEHVDNVVAFVGPAEVVLAWTDDENDPQYAMSKADLELLEQETDAKGCHFTIHKLPIPAVRQVVTEEDLPGYIYEEGEEERYAGERLAASYVNFYIANKAVLVPQFEDVNDQVALDILSKCFPDRKVVGIPARDILLGGGNIHCITQQIPE.

The active-site Amidino-cysteine intermediate is the cysteine 354.

It belongs to the agmatine deiminase family.

It catalyses the reaction agmatine + H2O = N-carbamoylputrescine + NH4(+). The chain is Putative agmatine deiminase from Streptococcus pneumoniae (strain ATCC BAA-255 / R6).